Consider the following 416-residue polypeptide: MAIVDVKVPQLSESVAEATMLNWKKKPGEAVAQDEILIEIETDKVVLEVPAPSAGVLSIIVKNDGDTVVADEIIAKIDTEATAGAAAPAAAAPAPAAAAPAPAAAVAAPAAAGGVAMPSAAKLMAEAGLSAGQVAGTGKDGRITKGDALAAAAAPAAKAAPAPAAAKPALQQVSAPVDFAALGDRPEERVPMSRLRARIAERLLQSQSTNAILTTFNEVNMKPVMDLRNKYKDRFEKEHGVKLGFMSFFVKAAVHALKKFPLINASIDGNDIVYHGYFDIGIAVGSPRGLVVPILRNADQMSLADIEKKIAEFGVKARDGKLSLEELTGGTFSISNGGVFGSMLSTPIINPPQSAILGVHATKDRPVVEDGQIVIRPMNYLAMSYDHRIIDGREAVLGLVAMKDALEDPARLLLDL.

In terms of domain architecture, Lipoyl-binding spans 3 to 78 (IVDVKVPQLS…VADEIIAKID (76 aa)). Lysine 44 is subject to N6-lipoyllysine. A Peripheral subunit-binding (PSBD) domain is found at 115-152 (VAMPSAAKLMAEAGLSAGQVAGTGKDGRITKGDALAAA). Active-site residues include histidine 387 and aspartate 391.

This sequence belongs to the 2-oxoacid dehydrogenase family. Forms a 24-polypeptide structural core with octahedral symmetry. Part of the 2-oxoglutarate dehydrogenase (OGDH) complex composed of E1 (2-oxoglutarate dehydrogenase), E2 (dihydrolipoamide succinyltransferase) and E3 (dihydrolipoamide dehydrogenase); the complex contains multiple copies of the three enzymatic components (E1, E2 and E3). Requires (R)-lipoate as cofactor.

It carries out the reaction N(6)-[(R)-dihydrolipoyl]-L-lysyl-[protein] + succinyl-CoA = N(6)-[(R)-S(8)-succinyldihydrolipoyl]-L-lysyl-[protein] + CoA. Its pathway is amino-acid degradation; L-lysine degradation via saccharopine pathway; glutaryl-CoA from L-lysine: step 6/6. Its function is as follows. E2 component of the 2-oxoglutarate dehydrogenase (OGDH) complex which catalyzes the second step in the conversion of 2-oxoglutarate to succinyl-CoA and CO(2). The sequence is that of Dihydrolipoyllysine-residue succinyltransferase component of 2-oxoglutarate dehydrogenase complex (sucB) from Cupriavidus necator (strain ATCC 17699 / DSM 428 / KCTC 22496 / NCIMB 10442 / H16 / Stanier 337) (Ralstonia eutropha).